The sequence spans 266 residues: Regulatory protein RecX (266 aa).

It belongs to the RecX family.

The protein resides in the cytoplasm. Modulates RecA activity. This chain is Regulatory protein RecX, found in Enterococcus faecalis (strain ATCC 700802 / V583).